The sequence spans 1013 residues: MPAKGRIIRVTGPLVIADGMKGAKMYEVVRVGELGLIGEIIRLEGDKAVIQVYEETAGLKPGEPVEGTGSSLSVELGPGLLTSIYDGIQRPLEVLREKSGHFIARGISAPALPRDKKWHFTPKVKVGDKVVGGDIIGEVPETSIIVHKIMVPPGIEGEIVEIADEGEYTIEEVIAKVKTPSGEIKELKMYQRWPVRVKRPYKEKLPPEVPLVTGQRVIDTFFPQAKGGTAAIPGPFGSGKCVDGDTLILTKEFGLIKIKDLYEKLDGKGRKTVEGNEEWTELEEPITVYGYKNGKIVEIKATHVYKGASSGMIEIKTRTGRKIKVTPIHKLFTGRVTKDGLVLEEVMAMHIKPGDRIAVVKKIDGGEYVKLDTSSVTKIKVPEVLNEELAEFLGYVIGDGTLKPRTVAIYNNDESLLKRANFLAMKLFGVSGKIVQERTVKALLIHSKYLVDFLKKLGIPGNKKARTWKVPKELLLSPPSVVKAFINAYIACDGYYNKEKGEIEIVTASEEGAYGLTYLLAKLGIYATIRRKTINGREYYRVVISGKANLEKLGVKREARGYTSIDVVPVDVESIYEALGRPYSELKKEGIEIHNYLSGENMSYETFRKFAKVVGLEEIAENHLQHILFDEVVEVNYISEPQEVYDITTETHNFVGGNMPTLLHNTVTQHQLAKWSDAQVVVYIGCGERGNEMTDVLEEFPKLKDPNTGKPLMERTVLIANTSNMPVAAREASIYTGITIAEYFRDMGYDVALMADSTSRWAEALREISGRLEEMPGEEGYPAYLASRLAEFYERAGRVVTLGSDYRVGSVSVIGAVSPPGGDFSEPVVQNTLRVVKVFWALDADLARRRHFPAINWLTSYSLYVDAVQDWWHKNVDPEWRRMRDKAMELLQKEAELQEIVRIVGPDALPERERAILLVARMLREDYLQQDAFDEVDTYCPPQKQVTMMRVLMTFYERTMDAISRGVPLEEIAKLPVREEIGRMKFEPDIEKIRALIDKTNEQFDELLKKYGA.

In terms of domain architecture, DOD-type homing endonuclease spans 392-525 (FLGYVIGDGT…LTYLLAKLGI (134 aa)).

The protein belongs to the ATPase alpha/beta chains family. In terms of assembly, has multiple subunits with at least A(3), B(3), C, D, E, F, H, I and proteolipid K(x). Post-translationally, this protein undergoes a protein self splicing that involves a post-translational excision of the VDE intervening region (intein) followed by peptide ligation.

The protein localises to the cell membrane. The enzyme catalyses ATP + H2O + 4 H(+)(in) = ADP + phosphate + 5 H(+)(out). Its function is as follows. Component of the A-type ATP synthase that produces ATP from ADP in the presence of a proton gradient across the membrane. The A chain is the catalytic subunit. The chain is A-type ATP synthase subunit A from Pyrococcus furiosus (strain ATCC 43587 / DSM 3638 / JCM 8422 / Vc1).